Consider the following 315-residue polypeptide: Probable integrase/recombinase aq_aa09 (315 aa).

The Core-binding (CB) domain occupies 1 to 78; the sequence is MEHFIDTYLY…EVRLFYEWLQ (78 aa). One can recognise a Tyr recombinase domain in the interval 106–313; the sequence is SKKKYYSDDE…REKQLEAILE (208 aa). Catalysis depends on residues Arg150, Lys186, His263, Arg266, and His289. Tyr299 serves as the catalytic O-(3'-phospho-DNA)-tyrosine intermediate.

This sequence belongs to the 'phage' integrase family.

In terms of biological role, may function as an integrase. The chain is Probable integrase/recombinase aq_aa09 from Aquifex aeolicus (strain VF5).